Consider the following 323-residue polypeptide: Down-regulator of invasive growth 2 (323 aa).

The span at 1–10 (MNKEEQEDPQ) shows a compositional bias: acidic residues. The interval 1-26 (MNKEEQEDPQQEQISTVQENDPRNLQ) is disordered. Over residues 11 to 26 (QEQISTVQENDPRNLQ) the composition is skewed to polar residues. At serine 34 the chain carries Phosphoserine. The interval 67-87 (LSQKEEDHSGKPPTITTSPAE) is disordered. Residues serine 225, serine 266, and serine 270 each carry the phosphoserine modification.

In terms of assembly, forms a complex with DIG1, STE12 and either FUS3 or KSS1. The interaction of FUS3 with STE12 depends on the presence of both DIG1 and DIG2. STE12 is lost from FUS3/DIG1/DIG2 complex after pheromone treatment. DIG1 and DIG2 have also been reported to interact with CLN1 and CLN2. In terms of processing, phosphorylated by FUS3 and KSS1, in a pheromone-stimulated manner.

Its subcellular location is the nucleus. In terms of biological role, DIG2 and DIG1 are negative regulators of the filamentation and pheromone induced mating program. DIG1 and DIG2 inhibit the transcriptional activity of STE12 by direct protein-protein interaction. DIG2 binds to the DNA binding domain (DBD) of STE12 and thus inhibits transcription when overexpressed. This Saccharomyces cerevisiae (strain ATCC 204508 / S288c) (Baker's yeast) protein is Down-regulator of invasive growth 2 (DIG2).